The primary structure comprises 872 residues: DNA mismatch repair protein MutS (872 aa).

An ATP-binding site is contributed by 622-629 (GPNMAGKS).

It belongs to the DNA mismatch repair MutS family.

Its function is as follows. This protein is involved in the repair of mismatches in DNA. It is possible that it carries out the mismatch recognition step. This protein has a weak ATPase activity. The protein is DNA mismatch repair protein MutS of Geobacter metallireducens (strain ATCC 53774 / DSM 7210 / GS-15).